We begin with the raw amino-acid sequence, 156 residues long: uncharacterized protein (156 aa).

A compositionally biased stretch (polar residues) spans 1-12 (MSSRFARSNGNP). The tract at residues 1 to 27 (MSSRFARSNGNPNHIRKRNHSPDPIGI) is disordered. Phosphoserine is present on Ser21.

It localises to the cytoplasm. The protein resides in the nucleus. This is an uncharacterized protein from Saccharomyces cerevisiae (strain ATCC 204508 / S288c) (Baker's yeast).